Consider the following 44-residue polypeptide: Protein PsbN (44 aa).

Residues 6-26 (FFYGVFLWCLLISVTGYSIYI) traverse the membrane as a helical segment.

The protein belongs to the PsbN family.

It localises to the plastid. Its subcellular location is the chloroplast thylakoid membrane. Its function is as follows. May play a role in photosystem I and II biogenesis. The protein is Protein PsbN of Ostreococcus tauri.